A 63-amino-acid polypeptide reads, in one-letter code: uncharacterized protein (63 aa).

This is an uncharacterized protein from Vaccinia virus (strain Western Reserve) (VACV).